Here is a 47-residue protein sequence, read N- to C-terminus: PhoP/PhoQ regulator MgrB (47 aa).

The helical transmembrane segment at 6 to 26 threads the bilayer; it reads WVVLGIVVVVCLLLWAQVFNI.

This sequence belongs to the MgrB family. In terms of assembly, may form homooligomers. Probably interacts with the periplasmic domain of PhoQ.

The protein resides in the cell inner membrane. Functionally, phoP-regulated transcription is redox-sensitive, being activated when the periplasm becomes more reducing. MgrB acts between DsbA/DsbB and PhoP/PhoQ in this pathway. Represses PhoP/PhoQ signaling, possibly by binding to the periplasmic domain of PhoQ, altering its activity and that of downstream effector PhoP. In Salmonella agona (strain SL483), this protein is PhoP/PhoQ regulator MgrB.